The following is a 268-amino-acid chain: ELL-associated factor 1 (268 aa).

Residues 106–268 (IQVKKTRAEG…LSESGSDSDD (163 aa)) are disordered. The span at 128 to 154 (TRPPQTSQPPPPPPPMPFRAPTKPPVG) shows a compositional bias: pro residues. Serine 165 carries the phosphoserine modification. Residues 171–181 (DDIKRELRAEV) are compositionally biased toward basic and acidic residues. Residues 182–262 (DIIEQMSSSS…LRNDLQLSES (81 aa)) form a necessary for transactivation activity region. Over residues 188–213 (SSSSGSSSSDSESSSGSDDDSSSSGG) the composition is skewed to low complexity. Positions 238 to 268 (NGTSRPQGSNQLMNTLRNDLQLSESGSDSDD) are enriched in polar residues.

It belongs to the EAF family. As to quaternary structure, component of the super elongation complex (SEC), at least composed of EAF1, EAF2, CDK9, MLLT3/AF9, AFF (AFF1 or AFF4), the P-TEFb complex and ELL (ELL, ELL2 or ELL3). Interacts with ELL and ELL2. In terms of tissue distribution, strongly expressed in heart, brain, placenta, lung, liver, skeletal muscle, kidney, pancreas, spleen, prostate, testis, small intestine and colon. Poorly expressed in thymus.

Its subcellular location is the nucleus speckle. The protein localises to the nucleus. The protein resides in the cajal body. Functionally, acts as a transcriptional transactivator of ELL and ELL2 elongation activities. The polypeptide is ELL-associated factor 1 (EAF1) (Homo sapiens (Human)).